The primary structure comprises 917 residues: Protein translocase subunit SecA (917 aa).

ATP contacts are provided by residues Q87, 105–109, and D501; that span reads GEGKT. Positions 901, 903, 912, and 913 each coordinate Zn(2+).

Belongs to the SecA family. As to quaternary structure, monomer and homodimer. Part of the essential Sec protein translocation apparatus which comprises SecA, SecYEG and auxiliary proteins SecDF-YajC and YidC. The cofactor is Zn(2+).

It is found in the cell inner membrane. Its subcellular location is the cytoplasm. The enzyme catalyses ATP + H2O + cellular proteinSide 1 = ADP + phosphate + cellular proteinSide 2.. Part of the Sec protein translocase complex. Interacts with the SecYEG preprotein conducting channel. Has a central role in coupling the hydrolysis of ATP to the transfer of proteins into and across the cell membrane, serving both as a receptor for the preprotein-SecB complex and as an ATP-driven molecular motor driving the stepwise translocation of polypeptide chains across the membrane. This is Protein translocase subunit SecA from Granulibacter bethesdensis (strain ATCC BAA-1260 / CGDNIH1).